We begin with the raw amino-acid sequence, 259 residues long: ATP synthase subunit a (259 aa).

Positions 1 to 7 (MTNNYIN) are cleaved as a propeptide — removed in mature form. Helical transmembrane passes span 36 to 56 (FSLYTLFVVLVISLTFILSIG), 95 to 115 (YVPLVYTLFTFILVANLIGMV), 125 to 145 (LIYIIGISVSLWIGLTILGLF), 164 to 206 (LVPV…NLVK), and 211 to 253 (INYF…SYLK).

In terms of assembly, F-type ATP synthases have 2 components, the catalytic core F(1) and the membrane-embedded component F(0), linked together by a central stalk and a peripheral stalk. The central stalk, also called rotor shaft, is often seen as part of F(1). The peripheral stalk is seen as part of F(0). F(0) contains the membrane channel next to the rotor. F-type ATP synthases form dimers but each monomer functions independently in ATP generation. The dimer consists of 18 different polypeptides: ATP1 (subunit alpha, part of F(1), 3 molecules per monomer), ATP2 (subunit beta, part of F(1), 3 molecules per monomer), ATP3 (subunit gamma, part of the central stalk), ATP4 (subunit b, part of the peripheral stalk), ATP5/OSCP (subunit 5/OSCP, part of the peripheral stalk), ATP6 (subunit a, part of the peripheral stalk), ATP7 (subunit d, part of the peripheral stalk), ATP8 (subunit 8, part of the peripheral stalk), OLI1 (subunit c, part of the rotor, 10 molecules per monomer), ATP14 (subunit h, part of the peripheral stalk), ATP15 (subunit epsilon, part of the central stalk), ATP16 (subunit delta, part of the central stalk), ATP17 (subunit f, part of the peripheral stalk), ATP18 (subunit i/j, part of the peripheral stalk). Dimer-specific subunits are ATP19 (subunit k, at interface between monomers), ATP20 (subunit g, at interface between monomers), TIM11 (subunit e, at interface between monomers). Also contains subunit L.

It localises to the mitochondrion inner membrane. In terms of biological role, mitochondrial membrane ATP synthase (F(1)F(0) ATP synthase or Complex V) produces ATP from ADP in the presence of a proton gradient across the membrane which is generated by electron transport complexes of the respiratory chain. F-type ATP synthases consist of two structural domains, F(1) - containing the extramembraneous catalytic core, and F(0) - containing the membrane proton channel, linked together by a central stalk and a peripheral stalk. During catalysis, ATP synthesis in the catalytic domain of F(1) is coupled via a rotary mechanism of the central stalk subunits to proton translocation. Key component of the proton channel; it may play a direct role in the translocation of protons across the membrane. This chain is ATP synthase subunit a, found in Pichia angusta (Yeast).